The sequence spans 348 residues: Dihydroorotase (348 aa).

Zn(2+)-binding residues include histidine 14 and histidine 16. Residues 16–18 (HLR) and asparagine 42 each bind substrate. Residues lysine 100, histidine 137, and histidine 175 each coordinate Zn(2+). Lysine 100 bears the N6-carboxylysine mark. Position 137 (histidine 137) interacts with substrate. Position 220 (leucine 220) interacts with substrate. Aspartate 248 serves as a coordination point for Zn(2+). The active site involves aspartate 248. 2 residues coordinate substrate: histidine 252 and alanine 264.

Belongs to the metallo-dependent hydrolases superfamily. DHOase family. Class II DHOase subfamily. Homodimer. The cofactor is Zn(2+).

It carries out the reaction (S)-dihydroorotate + H2O = N-carbamoyl-L-aspartate + H(+). The protein operates within pyrimidine metabolism; UMP biosynthesis via de novo pathway; (S)-dihydroorotate from bicarbonate: step 3/3. Its function is as follows. Catalyzes the reversible cyclization of carbamoyl aspartate to dihydroorotate. The sequence is that of Dihydroorotase from Pseudomonas putida (strain GB-1).